The primary structure comprises 299 residues: Acetylglutamate kinase (299 aa).

Residues 70–71 (GG), arginine 92, and asparagine 197 each bind substrate.

This sequence belongs to the acetylglutamate kinase family. ArgB subfamily.

Its subcellular location is the cytoplasm. It carries out the reaction N-acetyl-L-glutamate + ATP = N-acetyl-L-glutamyl 5-phosphate + ADP. Its pathway is amino-acid biosynthesis; L-arginine biosynthesis; N(2)-acetyl-L-ornithine from L-glutamate: step 2/4. Catalyzes the ATP-dependent phosphorylation of N-acetyl-L-glutamate. In Acidiphilium cryptum (strain JF-5), this protein is Acetylglutamate kinase.